The sequence spans 220 residues: Deoxyribose-phosphate aldolase 1 (220 aa).

The active-site Proton donor/acceptor is the Asp89. Lys151 acts as the Schiff-base intermediate with acetaldehyde in catalysis. Lys180 serves as the catalytic Proton donor/acceptor.

The protein belongs to the DeoC/FbaB aldolase family. DeoC type 1 subfamily.

The protein localises to the cytoplasm. The catalysed reaction is 2-deoxy-D-ribose 5-phosphate = D-glyceraldehyde 3-phosphate + acetaldehyde. It functions in the pathway carbohydrate degradation; 2-deoxy-D-ribose 1-phosphate degradation; D-glyceraldehyde 3-phosphate and acetaldehyde from 2-deoxy-alpha-D-ribose 1-phosphate: step 2/2. Catalyzes a reversible aldol reaction between acetaldehyde and D-glyceraldehyde 3-phosphate to generate 2-deoxy-D-ribose 5-phosphate. The protein is Deoxyribose-phosphate aldolase 1 of Staphylococcus aureus (strain MSSA476).